Here is a 790-residue protein sequence, read N- to C-terminus: Cadherin-6 (790 aa).

Residues 1–18 (MRTYRYFLLLFWVGQPYP) form the signal peptide. The propeptide occupies 19–53 (TFSTPLSKRTSGFPAKKRTLELSGNSKNELSRSKR). Cadherin domains follow at residues 54–159 (SWMW…EPIF), 160–268 (TKEV…PPRF), 269–383 (PQST…PPVF), 384–486 (SKLA…DNPP), and 487–608 (EFAE…LVHP). Residues 54–615 (SWMWNQFFLL…VHPTGLSTGA (562 aa)) lie on the Extracellular side of the membrane. A glycan (N-linked (GlcNAc...) asparagine) is linked at Asn255. Positions 261-291 (VNDNPPRFPQSTYQFKTPESSPPGTPIGRIK) are disordered. Polar residues predominate over residues 269 to 279 (PQSTYQFKTPE). Residues Asn399, Asn437, Asn455, and Asn536 are each glycosylated (N-linked (GlcNAc...) asparagine). A helical transmembrane segment spans residues 616-636 (LIAILLCIVTLLVTVVLFAAL). The Cytoplasmic portion of the chain corresponds to 637 to 790 (RRQRKKEPLI…YGGVDSDKDS (154 aa)). Phosphoserine is present on residues Ser786 and Ser790.

It is found in the cell membrane. Its function is as follows. Cadherins are calcium-dependent cell adhesion proteins. They preferentially interact with themselves in a homophilic manner in connecting cells; cadherins may thus contribute to the sorting of heterogeneous cell types. The protein is Cadherin-6 (CDH6) of Bos taurus (Bovine).